The primary structure comprises 469 residues: tRNA(Ile)-lysidine synthase (469 aa).

26–31 (SGGPDS) is a binding site for ATP.

This sequence belongs to the tRNA(Ile)-lysidine synthase family.

The protein localises to the cytoplasm. It catalyses the reaction cytidine(34) in tRNA(Ile2) + L-lysine + ATP = lysidine(34) in tRNA(Ile2) + AMP + diphosphate + H(+). In terms of biological role, ligates lysine onto the cytidine present at position 34 of the AUA codon-specific tRNA(Ile) that contains the anticodon CAU, in an ATP-dependent manner. Cytidine is converted to lysidine, thus changing the amino acid specificity of the tRNA from methionine to isoleucine. In Clostridium perfringens (strain ATCC 13124 / DSM 756 / JCM 1290 / NCIMB 6125 / NCTC 8237 / Type A), this protein is tRNA(Ile)-lysidine synthase.